Here is a 270-residue protein sequence, read N- to C-terminus: Cell division protein DivIB (270 aa).

Topologically, residues 1–38 (MTRRNNPELNDEREPIDKIKASIDLKKKTIRRNKRKRR) are cytoplasmic. The helical transmembrane segment at 39 to 59 (LIKMLQFLIVIGVLIGIYYFD) threads the bilayer. Over 60 to 270 (KSDASRVHNV…QSAVVKACGS (211 aa)) the chain is Extracellular. One can recognise a POTRA domain in the interval 64 to 135 (SRVHNVRVNG…INLNVTEKKA (72 aa)).

The protein belongs to the FtsQ/DivIB family. DivIB subfamily.

Its subcellular location is the cell membrane. Its function is as follows. Cell division protein that may be involved in stabilizing or promoting the assembly of the division complex. This chain is Cell division protein DivIB, found in Erysipelothrix rhusiopathiae (strain Fujisawa).